The chain runs to 553 residues: Protein PALS2 (553 aa).

2 consecutive L27 domains span residues methionine 1–lysine 48 and leucine 49–proline 107. Residues isoleucine 129 to tyrosine 208 enclose the PDZ domain. The SH3 domain occupies valine 228–lysine 297. The Guanylate kinase-like domain maps to arginine 351 to glutamate 538. Tyrosine 513 is modified (phosphotyrosine).

Belongs to the MAGUK family. As to quaternary structure, interacts with CADM1. Interacts with the LIN7 proteins.

It is found in the membrane. The protein is Protein PALS2 of Mus musculus (Mouse).